The chain runs to 203 residues: SOSS complex subunit B1 (203 aa).

The segment at residues 22–92 (IVLETGRVTK…TLYTGRGGDL (71 aa)) is a DNA-binding region (OB). The interval 111–203 (PNPEYIAQQS…GKEPRRTGKR (93 aa)) is disordered. The segment covering 117–128 (AQQSQNKQAQAE) has biased composition (polar residues). Residues 129-140 (SGTGTNSHNSSS) show a composition bias toward low complexity. Over residues 149–182 (ENGNGSNSSGPPTHQSTAPTHSTSGRITRSQPNH) the composition is skewed to polar residues.

It belongs to the SOSS-B family. SOSS-B1 subfamily. In terms of assembly, component of the SOSS complex, composed of soss-b (soss-b1/nabp2 or soss-b2/nabp1), soss-a/ints3 and soss-c/inip. SOSS complexes containing soss-b1/nabp2 are more abundant than complexes containing soss-b2/nabp1.

The protein resides in the nucleus. In terms of biological role, component of the SOSS complex, a multiprotein complex that functions downstream of the MRN complex to promote DNA repair and G2/M checkpoint. In the SOSS complex, acts as a sensor of single-stranded DNA that binds to single-stranded DNA. The SOSS complex associates with DNA lesions and influences diverse endpoints in the cellular DNA damage response including cell-cycle checkpoint activation, recombinational repair and maintenance of genomic stability. Required for efficient homologous recombination-dependent repair of double-strand breaks (DSBs). This is SOSS complex subunit B1 (nabp2) from Xenopus tropicalis (Western clawed frog).